A 40-amino-acid chain; its full sequence is Photosystem II reaction center protein J (40 aa).

The chain crosses the membrane as a helical span at residues 8-28; it reads IPLWLIGTVTGIIVIGLIGIF.

Belongs to the PsbJ family. In terms of assembly, PSII is composed of 1 copy each of membrane proteins PsbA, PsbB, PsbC, PsbD, PsbE, PsbF, PsbH, PsbI, PsbJ, PsbK, PsbL, PsbM, PsbT, PsbX, PsbY, PsbZ, Psb30/Ycf12, at least 3 peripheral proteins of the oxygen-evolving complex and a large number of cofactors. It forms dimeric complexes.

The protein localises to the plastid. It localises to the chloroplast thylakoid membrane. Its function is as follows. One of the components of the core complex of photosystem II (PSII). PSII is a light-driven water:plastoquinone oxidoreductase that uses light energy to abstract electrons from H(2)O, generating O(2) and a proton gradient subsequently used for ATP formation. It consists of a core antenna complex that captures photons, and an electron transfer chain that converts photonic excitation into a charge separation. The chain is Photosystem II reaction center protein J from Piper cenocladum (Ant piper).